The chain runs to 90 residues: Progonadoliberin-3 (90 aa).

Positions 1–23 (MEASSRVTVQVLLLALVVQVTLS) are cleaved as a signal peptide. The residue at position 24 (Gln24) is a Pyrrolidone carboxylic acid. Residue Gly33 is modified to Glycine amide.

This sequence belongs to the GnRH family.

It localises to the secreted. In terms of biological role, stimulates the secretion of gonadotropins. The sequence is that of Progonadoliberin-3 (gnrh3) from Pagrus major (Red sea bream).